The primary structure comprises 336 residues: Ketol-acid reductoisomerase (NADP(+)) (336 aa).

One can recognise a KARI N-terminal Rossmann domain in the interval 1–182 (MAVIYYDKDA…GVTRAGVIET (182 aa)). NADP(+) is bound by residues 25–28 (YGSQ), arginine 48, serine 51, serine 53, and 83–86 (DENQ). Histidine 108 is a catalytic residue. An NADP(+)-binding site is contributed by glycine 134. The region spanning 183-328 (TFKEETETDL…KELRKMMPWL (146 aa)) is the KARI C-terminal knotted domain. Mg(2+)-binding residues include aspartate 191, glutamate 195, glutamate 227, and glutamate 231. Serine 252 provides a ligand contact to substrate.

The protein belongs to the ketol-acid reductoisomerase family. Requires Mg(2+) as cofactor.

The enzyme catalyses (2R)-2,3-dihydroxy-3-methylbutanoate + NADP(+) = (2S)-2-acetolactate + NADPH + H(+). It catalyses the reaction (2R,3R)-2,3-dihydroxy-3-methylpentanoate + NADP(+) = (S)-2-ethyl-2-hydroxy-3-oxobutanoate + NADPH + H(+). The protein operates within amino-acid biosynthesis; L-isoleucine biosynthesis; L-isoleucine from 2-oxobutanoate: step 2/4. Its pathway is amino-acid biosynthesis; L-valine biosynthesis; L-valine from pyruvate: step 2/4. In terms of biological role, involved in the biosynthesis of branched-chain amino acids (BCAA). Catalyzes an alkyl-migration followed by a ketol-acid reduction of (S)-2-acetolactate (S2AL) to yield (R)-2,3-dihydroxy-isovalerate. In the isomerase reaction, S2AL is rearranged via a Mg-dependent methyl migration to produce 3-hydroxy-3-methyl-2-ketobutyrate (HMKB). In the reductase reaction, this 2-ketoacid undergoes a metal-dependent reduction by NADPH to yield (R)-2,3-dihydroxy-isovalerate. The sequence is that of Ketol-acid reductoisomerase (NADP(+)) from Thermotoga petrophila (strain ATCC BAA-488 / DSM 13995 / JCM 10881 / RKU-1).